The following is a 392-amino-acid chain: O-phospho-L-seryl-tRNA:Cys-tRNA synthase 1 (392 aa).

Residues alanine 85–arginine 86, asparagine 190, and serine 213–histidine 215 each bind pyridoxal 5'-phosphate. Position 216 is an N6-(pyridoxal phosphate)lysine (lysine 216).

It belongs to the SepCysS family. In terms of assembly, homodimer. Interacts with SepRS. It depends on pyridoxal 5'-phosphate as a cofactor.

It carries out the reaction O-phospho-L-seryl-tRNA(Cys) + hydrogen sulfide + H(+) = L-cysteinyl-tRNA(Cys) + phosphate. Its function is as follows. Converts O-phospho-L-seryl-tRNA(Cys) (Sep-tRNA(Cys)) to L-cysteinyl-tRNA(Cys) (Cys-tRNA(Cys)). The sequence is that of O-phospho-L-seryl-tRNA:Cys-tRNA synthase 1 from Methanoregula boonei (strain DSM 21154 / JCM 14090 / 6A8).